The primary structure comprises 904 residues: Leucine--tRNA ligase (904 aa).

Residues 49–59 carry the 'HIGH' region motif; that stretch reads PYPSGDLHIGH. Residues 663–667 carry the 'KMSKS' region motif; sequence TMSKS. Position 666 (Lys666) interacts with ATP.

This sequence belongs to the class-I aminoacyl-tRNA synthetase family.

The protein resides in the cytoplasm. The enzyme catalyses tRNA(Leu) + L-leucine + ATP = L-leucyl-tRNA(Leu) + AMP + diphosphate. The polypeptide is Leucine--tRNA ligase (Roseiflexus castenholzii (strain DSM 13941 / HLO8)).